The following is a 343-amino-acid chain: Signaling lymphocytic activation molecule (343 aa).

The first 24 residues, 1-24 (MDPKGSLSWRILLFLSLAFELSYG), serve as a signal peptide directing secretion. Residues 25–242 (TGGGVMDCPV…KQESSSESSP (218 aa)) are Extracellular-facing. In terms of domain architecture, Ig-like V-type spans 29–138 (VMDCPVILQK…VQQFCKQLKL (110 aa)). Asn54, Asn58, Asn103, Asn126, Asn151, Asn158, Asn192, Asn211, and Asn226 each carry an N-linked (GlcNAc...) asparagine glycan. Positions 145 to 228 (PEIKVLNKTQ…SSISRTFNLS (84 aa)) constitute an Ig-like C2-type domain. Disulfide bonds link Cys161-Cys232 and Cys167-Cys212. A helical membrane pass occupies residues 243-265 (WMQYTLVPLGVVIIFILVFTAII). The Cytoplasmic portion of the chain corresponds to 266–343 (MMKRQGKSNH…VYASVTLPES (78 aa)). Residues 286 to 291 (TIYAQV) carry the ITSM 1 motif. 3 positions are modified to phosphotyrosine; by FYN: Tyr288, Tyr315, and Tyr335. An SH2-binding motif is present at residues 313–318 (TIYVAA). Positions 320 to 343 (EPAPESVQEPNPTTVYASVTLPES) are disordered. Residues 327–343 (QEPNPTTVYASVTLPES) are compositionally biased toward polar residues. Positions 333-338 (TVYASV) match the ITSM 2 motif.

As to quaternary structure, interacts (via cytoplasmic domain) with SH2D1A and SH2D1B; SH2D1A mediates association with FYN; SH2D1A binds to phosphorylated and not phosphorylated ITSM 1. Interacts (via cytoplasmic domain phosphorylated on tyrosine residues) with INPP5D and PTPN11; presence of SH2D1A facilitates binding to INPP5D. Interacts with MAP4K1. Interacts with PIK3C3, BECN1 and UVRAG; indicative for an association with PI3K complex II (PI3KC3-C2). In terms of processing, phosphorylated on tyrosine residues by FYN.

It localises to the cell membrane. Functionally, self-ligand receptor of the signaling lymphocytic activation molecule (SLAM) family. SLAM receptors triggered by homo- or heterotypic cell-cell interactions are modulating the activation and differentiation of a wide variety of immune cells and thus are involved in the regulation and interconnection of both innate and adaptive immune response. Activities are controlled by presence or absence of small cytoplasmic adapter proteins, SH2D1A/SAP and/or SH2D1B/EAT-2. SLAMF1-induced signal-transduction events in T-lymphocytes are different from those in B-cells. Two modes of SLAMF1 signaling seem to exist: one depending on SH2D1A (and perhaps SH2D1B) and another in which protein-tyrosine phosphatase 2C (PTPN11)-dependent signal transduction operates. Initially it has been proposed that association with SH2D1A prevents binding to inhibitory effectors including INPP5D/SHIP1 and PTPN11/SHP-2. However, signaling is also regulated by SH2D1A which can simultaneously interact with and recruit FYN which subsequently phosphorylates and activates SLAMF1. Mediates IL-2-independent proliferation of activated T-cells during immune responses and induces IFN-gamma production. Downstreaming signaling involves INPP5D, DOK1 and DOK2 leading to inhibited IFN-gamma production in T-cells, and PRKCQ, BCL10 and NFKB1 leading to increased T-cell activation and Th2 cytokine production. Promotes T-cell receptor-induced IL-4 secretion by CD4(+) cells. Inhibits antigen receptor-mediated production of IFN-gamma, but not IL-2, in CD4(-)/CD8(-) T-cells. Required for IL-4 production by germinal centers T follicular helper (T(Fh))cells. May inhibit CD40-induced signal transduction in monocyte-derived dendritic cells. May play a role in allergic responses and may regulate allergen-induced Th2 cytokine and Th1 cytokine secretion. In conjunction with SLAMF6 controls the transition between positive selection and the subsequent expansion and differentiation of the thymocytic natural killer T (NKT) cell lineage. Involved in the peripheral differentiation of indifferent natural killer T (iNKT) cells toward a regulatory NKT2 type. In macrophages involved in down-regulation of IL-12, TNF-alpha and nitric oxide in response to lipopolysaccharide (LPS). In B-cells activates the ERK signaling pathway independently of SH2D1A but implicating both, SYK and INPP5D, and activates Akt signaling dependent on SYK and SH2D1A. In conjunction with CD84/SLAMF5 and SLAMF6 may be a negative regulator of the humoral immune response. In terms of biological role, (Microbial infection) Involved in innate immune response against Gram-negative bacteria in macrophages; probably recognizes OmpC and/or OmpF on the bacterial surface, regulates phagosome maturation and recruitment of the PI3K complex II (PI3KC3-C2) leading to accumulated of PdtIns(3)P and NOX2 activity in the phagosomes. In Mus musculus (Mouse), this protein is Signaling lymphocytic activation molecule (Slamf1).